The primary structure comprises 139 residues: Large ribosomal subunit protein uL16 (139 aa).

Over residues 1–16 (MLIPKRTKYRKQHRPD) the composition is skewed to basic residues. The tract at residues 1-23 (MLIPKRTKYRKQHRPDRHGMSKG) is disordered.

Belongs to the universal ribosomal protein uL16 family. As to quaternary structure, part of the 50S ribosomal subunit.

Its function is as follows. Binds 23S rRNA and is also seen to make contacts with the A and possibly P site tRNAs. This chain is Large ribosomal subunit protein uL16, found in Bifidobacterium animalis subsp. lactis (strain AD011).